Here is a 39-residue protein sequence, read N- to C-terminus: Gas vesicle protein C (39 aa).

Belongs to the gas vesicle GvpC family.

Its subcellular location is the gas vesicle. Functionally, confers stability, involved in shaping gas vesicles, hollow, gas filled proteinaceous nanostructures. During planktonic growth they allow positioning of the organism at a favorable depth for light or nutrient acquisition. This Spirulina sp. (strain CCAP 1475/10) protein is Gas vesicle protein C.